The sequence spans 575 residues: MGFRINTNVAALNAKANADLNSKSLDASLSRLSSGLRINSAADDASGMAIKDSLRSQANTLGQAISNGNDALGILQTADKAMDEQLKILDTIKTKATQAAQDGQSLKTRTMLQADINRLMEELDNIANTTSFNGKQLLSGNFINQEFQIGASSNQTVKASIGATQSSKIGLTRFETGSRISVGGEVQFTLKNYNGIDDFKFQKVVISTSVGTGLGALADEINKNADKTGVRATFTVETRGMGAVRAGATSDDFAINGVKIGKVDYKDGDANGALVSAINSVKDTTGVEASIDENGKLLLTSREGRGIKIEGNIGRGAFINPNMLENYGRLSLVKNDGKDILISGTNLSAIGFGTGNMISQASVSLRESKGQIDANVADAMGFNSANKGNILGGYSSVSAYMSSTGSGFSSGSGFSVGSGKNYSTGFANTIAISAASQLSAVYNVSAGSGFSSGSNLSQFATMKTSAGNTLGVKDETAGVTTLKGAMAVMDIAETAITNLDQIRADIGSVQNQVTSTINNITVTQVNVKAAESQIRDVDFAAESANYSKANILAQSGSYAMAQANSVQQNVLRLLQ.

Repeat copies occupy residues 405-409 (GSGFS), 411-415 (GSGFS), and 447-450 (GSGF).

The protein belongs to the bacterial flagellin family. Heteromer of flaA and flaB.

It is found in the secreted. The protein resides in the bacterial flagellum. Its function is as follows. Flagellin is the subunit protein which polymerizes to form the filaments of bacterial flagella. This is Flagellin A (flaA) from Campylobacter jejuni.